Consider the following 662-residue polypeptide: MCPARLRTPRTASLPTHRRSAMTTANPLNTSFTSADAAELYQVPNWSGGWFRVSDKGLMEATPAPGLHASLRAIVDEIVDRGESLPVILRFPQVLAGRVKHLNEAFQAAINEYNYSGHYQGVFPIKVNQRRAVVETVAAAGYDYAHGLEAGSKAELALCLAQKMHPDALLCCNGFKDDGFIKLALWGRTLGKNVVITIEKFTELDRILKQAKALGVKPAVGVRFKLHARGSGQWEESGGDQAKFGLNAYELLRVVERLKEENMLDSLVMLHTHIGSQITDIRRVKVAVREAAQTYAGLIAAGADLKYLNVGGGLGVDYDGSKTTFYASMNYTVKEYAADIVYTVQEVCKAREVPEPVIVSESGRALTAHHAVLILPVVDVTGPTRNLEDQELTVPGEDSHQIVRDMYETLENISMRNYRESYNDAVGDKQTLHNLFDLGYVTLEDRARGEALFNAILRKIAKLIQGEKYVPDELEDLQKVLADKFICNFSLFQSLPDNWAIGALFPIVPLDRLNEQPTRQATLVDITCDSDGKVEKFIDLRDVKATLPLHEPGDRPYYLGAFLMGAYQDVLGSAHNLFGKVSEAHVTVRPGGRFNIDLFVRGQKARRMIESMGYEEPMLRDAIEDQADAAIGRGTLTQEQEHELLEDYGEELLGYTYLEYES.

Lys-126 carries the N6-(pyridoxal phosphate)lysine modification. 308–318 (LNVGGGLGVDY) is a binding site for substrate.

It belongs to the Orn/Lys/Arg decarboxylase class-II family. SpeA subfamily. Mg(2+) serves as cofactor. Requires pyridoxal 5'-phosphate as cofactor.

It carries out the reaction L-arginine + H(+) = agmatine + CO2. Catalyzes the biosynthesis of agmatine from arginine. This chain is Biosynthetic arginine decarboxylase, found in Deinococcus radiodurans (strain ATCC 13939 / DSM 20539 / JCM 16871 / CCUG 27074 / LMG 4051 / NBRC 15346 / NCIMB 9279 / VKM B-1422 / R1).